A 486-amino-acid chain; its full sequence is Adenosylhomocysteinase (486 aa).

Substrate-binding residues include threonine 63, aspartate 147, and glutamate 209. 210–212 (TTT) lines the NAD(+) pocket. Substrate-binding residues include lysine 239 and aspartate 243. NAD(+) is bound by residues asparagine 244, 273–278 (GYGDVG), glutamate 296, asparagine 331, 352–354 (IGH), and asparagine 400.

Belongs to the adenosylhomocysteinase family. NAD(+) serves as cofactor.

The catalysed reaction is S-adenosyl-L-homocysteine + H2O = L-homocysteine + adenosine. It participates in amino-acid biosynthesis; L-homocysteine biosynthesis; L-homocysteine from S-adenosyl-L-homocysteine: step 1/1. In terms of biological role, adenosylhomocysteine is a competitive inhibitor of S-adenosyl-L-methionine-dependent methyl transferase reactions; therefore adenosylhomocysteinase may play a key role in the control of methylations via regulation of the intracellular concentration of adenosylhomocysteine. The chain is Adenosylhomocysteinase from Trichomonas vaginalis.